Reading from the N-terminus, the 428-residue chain is Cholecystokinin receptor type A (428 aa).

The Extracellular portion of the chain corresponds to M1–P41. Residues N10 and N24 are each glycosylated (N-linked (GlcNAc...) asparagine). C18 and C29 are joined by a disulfide. The chain crosses the membrane as a helical span at residues A42–I67. The Cytoplasmic portion of the chain corresponds to R68–N77. The chain crosses the membrane as a helical span at residues I78–L104. Residues K105 to K115 lie on the Extracellular side of the membrane. Cysteines 114 and 196 form a disulfide. A helical membrane pass occupies residues T116–L137. Residues E138–H157 are Cytoplasmic-facing. A helical membrane pass occupies residues A158–I178. Topologically, residues Y179–H210 are extracellular. N-linked (GlcNAc...) asparagine glycosylation occurs at N190. The helical transmembrane segment at T211–L234 threads the bilayer. Topologically, residues E235 to R313 are cytoplasmic. The segment at K248 to Q272 is disordered. Residues M314–A334 form a helical membrane-spanning segment. Residues W335 to G349 lie on the Extracellular side of the membrane. Residues T350–M373 traverse the membrane as a helical segment. Over N374 to Q428 the chain is Cytoplasmic. Residue C387 is the site of S-palmitoyl cysteine attachment. Positions P394–Q428 are disordered. Residues A411–S422 are compositionally biased toward polar residues.

This sequence belongs to the G-protein coupled receptor 1 family.

The protein resides in the cell membrane. In terms of biological role, receptor for cholecystokinin. Mediates pancreatic growth and enzyme secretion, smooth muscle contraction of the gall bladder and stomach. Has a 1000-fold higher affinity for CCK rather than for gastrin. It modulates feeding and dopamine-induced behavior in the central and peripheral nervous system. This receptor mediates its action by association with G proteins that activate a phosphatidylinositol-calcium second messenger system. The chain is Cholecystokinin receptor type A (CCKAR) from Homo sapiens (Human).